A 371-amino-acid chain; its full sequence is Ferrochelatase (371 aa).

Residues His218 and Glu299 each coordinate Fe cation.

Belongs to the ferrochelatase family.

Its subcellular location is the cytoplasm. It carries out the reaction heme b + 2 H(+) = protoporphyrin IX + Fe(2+). The protein operates within porphyrin-containing compound metabolism; protoheme biosynthesis; protoheme from protoporphyrin-IX: step 1/1. Its function is as follows. Catalyzes the ferrous insertion into protoporphyrin IX. The polypeptide is Ferrochelatase (Cupriavidus pinatubonensis (strain JMP 134 / LMG 1197) (Cupriavidus necator (strain JMP 134))).